A 428-amino-acid chain; its full sequence is Adenylosuccinate synthetase (428 aa).

GTP is bound by residues 12-18 (GDEGKGK) and 40-42 (GHT). Asp-13 acts as the Proton acceptor in catalysis. Mg(2+) is bound by residues Asp-13 and Gly-40. Residues 13-16 (DEGK), 38-41 (NAGH), Thr-128, Arg-142, Gln-223, Thr-238, and Arg-302 each bind IMP. His-41 serves as the catalytic Proton donor. 298–304 (VTTGRPR) is a binding site for substrate. GTP-binding positions include Arg-304, 330–332 (KLD), and 412–414 (GVG).

The protein belongs to the adenylosuccinate synthetase family. In terms of assembly, homodimer. The cofactor is Mg(2+).

Its subcellular location is the cytoplasm. It catalyses the reaction IMP + L-aspartate + GTP = N(6)-(1,2-dicarboxyethyl)-AMP + GDP + phosphate + 2 H(+). Its pathway is purine metabolism; AMP biosynthesis via de novo pathway; AMP from IMP: step 1/2. In terms of biological role, plays an important role in the de novo pathway of purine nucleotide biosynthesis. Catalyzes the first committed step in the biosynthesis of AMP from IMP. The protein is Adenylosuccinate synthetase of Halothermothrix orenii (strain H 168 / OCM 544 / DSM 9562).